Here is a 460-residue protein sequence, read N- to C-terminus: MSNRRLVIAGTGSGVPKTTLTIGLMAALKQAGYRVQGFKCGPDYIDPTYHTAVTERTSRNIDSWMLEHDMVREIVARASQDADISIMEGVMGFFDGKNPLTNEGSTAEISLITNSPVLLVVNCASMARSAAAIVKGFQQFLPEANIVGVIANRVGSEGHYKLVKAAIEQECHIPVVGYLKTNDELTIPERHLGLIPSIERGELTPFFEQLGQLVHDTIDIEKVYELALAPKIEINDPIFTKPSVPQVKIAVARDAAFNFYYEENFELLKACGAELVEFSPLKGEMVPQDADGLYIGGGFPEEFAETLAQQIDVKNSVRAAIQKGLPTLAECGGFMFLTDGIVTTDDTCYEMVGLIPGQVRMQTKLAALGYREVTGKPGNFLFKGDIQAKGHEFHYSTFYSEKEFSPAYDTKGMRGMKEEGYMNNNLIAGYTHFHFGSSTKMVENWVEQCKAAKKERRDAV.

Residues 248 to 440 (KIAVARDAAF…THFHFGSSTK (193 aa)) form the GATase cobBQ-type domain. Cys331 serves as the catalytic Nucleophile.

It belongs to the CobB/CbiA family. Mg(2+) serves as cofactor.

The catalysed reaction is cob(II)yrinate + 2 L-glutamine + 2 ATP + 2 H2O = cob(II)yrinate a,c diamide + 2 L-glutamate + 2 ADP + 2 phosphate + 2 H(+). The protein operates within cofactor biosynthesis; adenosylcobalamin biosynthesis; cob(II)yrinate a,c-diamide from sirohydrochlorin (anaerobic route): step 10/10. Functionally, catalyzes the ATP-dependent amidation of the two carboxylate groups at positions a and c of cobyrinate, using either L-glutamine or ammonia as the nitrogen source. The protein is Cobyrinate a,c-diamide synthase of Priestia megaterium (Bacillus megaterium).